A 238-amino-acid polypeptide reads, in one-letter code: UPF0328 protein ECU07_0010 (238 aa).

2 disordered regions span residues 1–154 and 211–238; these read MAAP…NTQR and GRLH…LATL. The span at 106 to 128 shows a compositional bias: basic and acidic residues; that stretch reads HTEGCHTHEANPEPNTKHTETES. The segment covering 129 to 152 has biased composition (polar residues); the sequence is PKPQTSTQHHTPITIPSSLLSQNT.

This sequence belongs to the UPF0328 family.

The protein is UPF0328 protein ECU07_0010 of Encephalitozoon cuniculi (strain GB-M1) (Microsporidian parasite).